A 145-amino-acid chain; its full sequence is UPF0179 protein MmarC6_0993 (145 aa).

The protein belongs to the UPF0179 family.

This chain is UPF0179 protein MmarC6_0993, found in Methanococcus maripaludis (strain C6 / ATCC BAA-1332).